The primary structure comprises 413 residues: Alpha-1-antitrypsin-like protein GS55-LT (413 aa).

A signal peptide spans 1-21 (MPSSISWGLLLLAGLSCLATG). Residues asparagine 65, asparagine 102, and asparagine 123 are each glycosylated (N-linked (GlcNAc...) asparagine). Residues 368–387 (RHTVKGPMALTLAPEVKFNR) form an RCL region.

This sequence belongs to the serpin family.

It is found in the secreted. Its function is as follows. Inhibitor of serine proteases. In Ictidomys tridecemlineatus (Thirteen-lined ground squirrel), this protein is Alpha-1-antitrypsin-like protein GS55-LT.